A 143-amino-acid polypeptide reads, in one-letter code: Acyl carrier protein 3, chloroplastic (143 aa).

The transit peptide at 1–60 (MATAAAGSSLICIKSASCSLNRAQVPSGLSSLRSVSLPISGKIFPSLRSSRGPLSFRVCC) directs the protein to the chloroplast. The Carrier domain maps to 64-139 (QETVTRVCEI…DAADLIEKLV (76 aa)). Serine 99 bears the O-(pantetheine 4'-phosphoryl)serine mark.

It belongs to the acyl carrier protein (ACP) family. 4'-phosphopantetheine is transferred from CoA to a specific serine of apo-ACP by acpS. This modification is essential for activity because fatty acids are bound in thioester linkage to the sulfhydryl of the prosthetic group.

The protein resides in the plastid. It localises to the chloroplast. It participates in lipid metabolism; fatty acid biosynthesis. In terms of biological role, carrier of the growing fatty acid chain in fatty acid biosynthesis. The polypeptide is Acyl carrier protein 3, chloroplastic (ACL1.3) (Cuphea lanceolata (Cigar flower)).